A 223-amino-acid polypeptide reads, in one-letter code: Killer cell lectin-like receptor subfamily B member 1B allele B (223 aa).

Over 1 to 45 the chain is Cytoplasmic; that stretch reads MDTAVVYADLHLARTGEPKHKSPPSLSPDTCQCPRWHRLALKLGC. The ITIM motif signature appears at 5-10; the sequence is VVYADL. The short motif at 31 to 34 is the LCK-binding motif element; sequence CQCP. The chain crosses the membrane as a helical; Signal-anchor for type II membrane protein span at residues 46–66; it reads ACLILLVLSVIGLGVLVLTLL. The Extracellular portion of the chain corresponds to 67–223; the sequence is QKPLIQNSPA…LKCECMCNGS (157 aa). In terms of domain architecture, C-type lectin spans 101–211; that stretch reads HQDKCFHVSQ…CDSDNLWICQ (111 aa). Intrachain disulfides connect Cys-122/Cys-210 and Cys-189/Cys-202.

As to quaternary structure, homodimer; disulfide-linked. Interacts with tyrosine kinase LCK. Binds PTPN6/SHP-1 in a phosphorylation-dependent manner. As to expression, expressed in a subset of natural killer cells.

It localises to the membrane. Its function is as follows. Receptor for CLEC2D/OCIL. Ligand-binding contributes to inhibition of cytotoxic natural killer (NK) cells. May mediate MHC class I-independent 'missing-self' recognition of allografts, tumor cells and virus-infected cells. The sequence is that of Killer cell lectin-like receptor subfamily B member 1B allele B from Rattus norvegicus (Rat).